Here is a 373-residue protein sequence, read N- to C-terminus: Peroxisomal biogenesis factor 3 (373 aa).

At 1–15 the chain is on the cytoplasmic side; sequence MLRSMWNFLKRHKKK. The interval 1–45 is targeting to peroxisomes; it reads MLRSMWNFLKRHKKKCIFLGTVLGGVYILGKYGQKKIREIQEREA. Residues 16 to 36 form a helical membrane-spanning segment; the sequence is CIFLGTVLGGVYILGKYGQKK. Residues 37-116 are Peroxisomal-facing; the sequence is IREIQEREAA…LKIISFTRSI (80 aa). Residues 117 to 140 form a helical membrane-spanning segment; it reads VAVYSTCMLVVLLRVQLNIIGGYI. The interval 120–136 is interaction with PEX19; the sequence is YSTCMLVVLLRVQLNII. The Cytoplasmic portion of the chain corresponds to 141–373; the sequence is YLDNATVGKN…AFSTPQQLEK (233 aa).

This sequence belongs to the peroxin-3 family. As to quaternary structure, interacts with PEX19.

The protein resides in the peroxisome membrane. In terms of biological role, involved in peroxisome biosynthesis and integrity. Assembles membrane vesicles before the matrix proteins are translocated. As a docking factor for PEX19, is necessary for the import of peroxisomal membrane proteins in the peroxisomes. The chain is Peroxisomal biogenesis factor 3 (PEX3) from Cricetulus longicaudatus (Long-tailed dwarf hamster).